The sequence spans 246 residues: Allergin-1 (246 aa).

A signal peptide spans 1–33 (MGDGDSPMCLSAVSFKGIRCWLDKLLLWALTIS). At 34 to 150 (ITLQNAAVDC…DESCPSCRLS (117 aa)) the chain is on the extracellular side. Residues 52 to 131 (PSPNLNSSMN…VNVSNLMKYS (80 aa)) enclose the Ig-like C2-type domain. N-linked (GlcNAc...) asparagine glycosylation occurs at Asn-68. An intrachain disulfide couples Cys-73 to Cys-120. Residues 151–171 (LLLPGLLLGILVIVLVLAYLI) traverse the membrane as a helical segment. The Cytoplasmic segment spans residues 172 to 246 (HLKYKKGKKT…ADYIYSELTH (75 aa)). Short sequence motifs (ITIM motif) lie at residues 214–219 (IHYATP) and 239–244 (YIYSEL). Phosphotyrosine is present on residues Tyr-216 and Tyr-241.

Monomer. Interacts (tyrosine-phosphorylated) with PTPN6, PTPN11 and INPP5D. Post-translationally, N-glycosylated. As to expression, expressed in myeloid cells (dendritic cells, macrophages and neutrophils but not in T-cells, B-cells or natural killer cells) and mast cells (at protein level).

It is found in the cell membrane. Its subcellular location is the secreted. Its function is as follows. Immunoglobulin-like receptor which plays an inhibitory role in degranulation of mast cells. Negatively regulates IgE-mediated mast cell activation and suppresses the type I immediate hypersensitivity reaction. This chain is Allergin-1 (Milr1), found in Mus musculus (Mouse).